The sequence spans 241 residues: Enolase-phosphatase E1 (241 aa).

Mg(2+) is bound by residues Asp9 and Glu11. Residues 133 to 134 (SS) and Lys172 contribute to the substrate site. A Mg(2+)-binding site is contributed by Asp198.

It belongs to the HAD-like hydrolase superfamily. MasA/MtnC family. In terms of assembly, monomer. Mg(2+) is required as a cofactor.

It localises to the cytoplasm. It is found in the nucleus. It catalyses the reaction 5-methylsulfanyl-2,3-dioxopentyl phosphate + H2O = 1,2-dihydroxy-5-(methylsulfanyl)pent-1-en-3-one + phosphate. Its pathway is amino-acid biosynthesis; L-methionine biosynthesis via salvage pathway; L-methionine from S-methyl-5-thio-alpha-D-ribose 1-phosphate: step 3/6. It functions in the pathway amino-acid biosynthesis; L-methionine biosynthesis via salvage pathway; L-methionine from S-methyl-5-thio-alpha-D-ribose 1-phosphate: step 4/6. Its function is as follows. Bifunctional enzyme that catalyzes the enolization of 2,3-diketo-5-methylthiopentyl-1-phosphate (DK-MTP-1-P) into the intermediate 2-hydroxy-3-keto-5-methylthiopentenyl-1-phosphate (HK-MTPenyl-1-P), which is then dephosphorylated to form the acireductone 1,2-dihydroxy-3-keto-5-methylthiopentene (DHK-MTPene). The chain is Enolase-phosphatase E1 from Scheffersomyces stipitis (strain ATCC 58785 / CBS 6054 / NBRC 10063 / NRRL Y-11545) (Yeast).